The primary structure comprises 101 residues: Small ribosomal subunit protein uS14 (101 aa).

The protein belongs to the universal ribosomal protein uS14 family. As to quaternary structure, part of the 30S ribosomal subunit. Contacts proteins S3 and S10.

Its function is as follows. Binds 16S rRNA, required for the assembly of 30S particles and may also be responsible for determining the conformation of the 16S rRNA at the A site. The polypeptide is Small ribosomal subunit protein uS14 (Ehrlichia canis (strain Jake)).